A 444-amino-acid chain; its full sequence is Exodeoxyribonuclease 7 large subunit (444 aa).

This sequence belongs to the XseA family. As to quaternary structure, heterooligomer composed of large and small subunits.

It localises to the cytoplasm. It carries out the reaction Exonucleolytic cleavage in either 5'- to 3'- or 3'- to 5'-direction to yield nucleoside 5'-phosphates.. Its function is as follows. Bidirectionally degrades single-stranded DNA into large acid-insoluble oligonucleotides, which are then degraded further into small acid-soluble oligonucleotides. The polypeptide is Exodeoxyribonuclease 7 large subunit (Rickettsia conorii (strain ATCC VR-613 / Malish 7)).